The chain runs to 476 residues: Growth arrest-specific protein 7 (476 aa).

In terms of domain architecture, SH3 spans 1–62; the sequence is MSGARCRTLY…PASYVQLLEK (62 aa). The WW domain occupies 77-110; that stretch reads VILPPGWQSYLSPQGRRYYVNTTTNETTWERPSS. The disordered stretch occupies residues 100–171; sequence TNETTWERPS…SSPSKKQSKE (72 aa). Positions 108 to 120 are enriched in low complexity; it reads PSSSPGIPASPGS. S117 and S163 each carry phosphoserine. The segment covering 150–171 has biased composition (polar residues); the sequence is RKSTGDSQNLGSSSPSKKQSKE. The F-BAR domain occupies 196-456; that stretch reads TEWSYCDYFW…LLRKVDPAKD (261 aa). The stretch at 309-419 forms a coiled coil; the sequence is ENFKKDMKKC…RLEVERVEMI (111 aa).

The protein localises to the cytoplasm. Its function is as follows. May play a role in promoting maturation and morphological differentiation of cerebellar neurons. The protein is Growth arrest-specific protein 7 (GAS7) of Homo sapiens (Human).